The sequence spans 365 residues: Flagellar P-ring protein (365 aa).

The first 22 residues, 1–22 (MSVRRFLVWILALTVGAAPVMA), serve as a signal peptide directing secretion.

It belongs to the FlgI family. As to quaternary structure, the basal body constitutes a major portion of the flagellar organelle and consists of four rings (L,P,S, and M) mounted on a central rod.

It localises to the periplasm. It is found in the bacterial flagellum basal body. Functionally, assembles around the rod to form the L-ring and probably protects the motor/basal body from shearing forces during rotation. The protein is Flagellar P-ring protein of Marinobacter nauticus (strain ATCC 700491 / DSM 11845 / VT8) (Marinobacter aquaeolei).